The sequence spans 186 residues: Elongation factor P (186 aa).

Belongs to the elongation factor P family.

The protein resides in the cytoplasm. Its pathway is protein biosynthesis; polypeptide chain elongation. Involved in peptide bond synthesis. Stimulates efficient translation and peptide-bond synthesis on native or reconstituted 70S ribosomes in vitro. Probably functions indirectly by altering the affinity of the ribosome for aminoacyl-tRNA, thus increasing their reactivity as acceptors for peptidyl transferase. This is Elongation factor P from Streptococcus pneumoniae (strain Hungary19A-6).